The sequence spans 312 residues: Malate dehydrogenase (312 aa).

NAD(+)-binding positions include 7–13 (GAAGGIG) and D34. Positions 81 and 87 each coordinate substrate. Residues N94 and 117 to 119 (ITN) contribute to the NAD(+) site. Substrate-binding residues include N119 and R153. H177 acts as the Proton acceptor in catalysis. M227 contributes to the NAD(+) binding site.

This sequence belongs to the LDH/MDH superfamily. MDH type 1 family. Homodimer.

It carries out the reaction (S)-malate + NAD(+) = oxaloacetate + NADH + H(+). Catalyzes the reversible oxidation of malate to oxaloacetate. The polypeptide is Malate dehydrogenase (Salmonella gallinarum (strain 287/91 / NCTC 13346)).